Reading from the N-terminus, the 596-residue chain is Two-component response regulator ARR12 (596 aa).

Positions 18-133 constitute a Response regulatory domain; sequence RVLAVDDDQT…ELKNIWQHVV (116 aa). The residue at position 69 (Asp-69) is a 4-aspartylphosphate. A compositionally biased stretch (basic and acidic residues) spans 138-153; that stretch reads DKNRGSNNNGDKRDGS. The interval 138 to 192 is disordered; that stretch reads DKNRGSNNNGDKRDGSGNEGVGNSDQNNGKGNRKRKDQYNEDEDEDRDDNDDSCA. Residues 158–167 are compositionally biased toward polar residues; sequence VGNSDQNNGK. Residues 177–189 show a composition bias toward acidic residues; that stretch reads NEDEDEDRDDNDD. A Nuclear localization signal motif is present at residues 194–197; it reads KKQR. The myb-like GARP DNA-binding region spans 197–247; it reads RVVWTVELHKKFVAAVNQLGYEKAMPKKILDLMNVEKLTRENVASHLQKFR. The tract at residues 437–467 is disordered; the sequence is NAVSSSTHPPPPAHNSNSINHQFDVSPLPHS. Over residues 450 to 459 the composition is skewed to polar residues; the sequence is HNSNSINHQF.

Belongs to the ARR family. Type-B subfamily. Binds the target DNA as a monomer. In terms of processing, two-component system major event consists of a His-to-Asp phosphorelay between a sensor histidine kinase (HK) and a response regulator (RR). In plants, the His-to-Asp phosphorelay involves an additional intermediate named Histidine-containing phosphotransfer protein (HPt). This multistep phosphorelay consists of a His-Asp-His-Asp sequential transfer of a phosphate group between first a His and an Asp of the HK protein, followed by the transfer to a conserved His of the HPt protein and finally the transfer to an Asp in the receiver domain of the RR protein. Detected in the whole plant. Predominantly expressed in leaves. Expressed at the root transition zone.

The protein localises to the nucleus. Functionally, transcriptional activator that binds specifically to the DNA sequence 5'-[AG]GATT-3'. Functions as a response regulator involved in His-to-Asp phosphorelay signal transduction system. Phosphorylation of the Asp residue in the receiver domain activates the ability of the protein to promote the transcription of target genes. Could directly activate some type-A response regulators in response to cytokinins. Involved in the root-meristem size determination through the regulation of cell differentiation. Involved in activating SHY2 during meristem growth and controls PIN expression via activation of SHY2. The chain is Two-component response regulator ARR12 (ARR12) from Arabidopsis thaliana (Mouse-ear cress).